The following is a 414-amino-acid chain: Na(+)/H(+) antiporter NhaA (414 aa).

11 consecutive transmembrane segments (helical) span residues 22–42 (VGGF…NSPF), 61–81 (LHLT…FFVV), 101–121 (MLPI…YAAF), 131–151 (GWGI…AVVG), 171–191 (LGAI…LPLI), 215–235 (SAAL…WALV), 239–259 (GVHA…VPLA), 281–301 (VLPV…LGAV), 308–328 (LGII…GSWV), 343–363 (WIDI…SLLI), and 379–399 (KAGV…VLAV).

It belongs to the NhaA Na(+)/H(+) (TC 2.A.33) antiporter family.

Its subcellular location is the cell membrane. It carries out the reaction Na(+)(in) + 2 H(+)(out) = Na(+)(out) + 2 H(+)(in). In terms of biological role, na(+)/H(+) antiporter that extrudes sodium in exchange for external protons. The polypeptide is Na(+)/H(+) antiporter NhaA (Thermobifida fusca (strain YX)).